Consider the following 1072-residue polypeptide: Carbamoyl phosphate synthase large chain (1072 aa).

Positions 1–401 (MPKRLDINTI…SLLKAVRSLE (401 aa)) are carboxyphosphate synthetic domain. ATP-binding residues include R129, R169, G175, G176, K208, I210, E215, G241, V242, H243, Q284, and E298. An ATP-grasp 1 domain is found at 133-327 (RTLMQDLNEP…IAKLAAKIAV (195 aa)). Q284, E298, and N300 together coordinate Mg(2+). Mn(2+) contacts are provided by Q284, E298, and N300. The tract at residues 402-546 (LGIYHLELDH…YSTYADENES (145 aa)) is oligomerization domain. Residues 547 to 929 (IVTDRKSVVV…ALYKGLVASG (383 aa)) form a carbamoyl phosphate synthetic domain region. One can recognise an ATP-grasp 2 domain in the interval 671–861 (EAALTKLGIP…MANVATKVIL (191 aa)). 9 residues coordinate ATP: R707, R746, E752, G777, V778, H779, S780, Q820, and E832. 3 residues coordinate Mg(2+): Q820, E832, and N834. The Mn(2+) site is built by Q820, E832, and N834. In terms of domain architecture, MGS-like spans 930-1072 (INIPTHGSVI…QTKRHEVVHA (143 aa)). Positions 930-1072 (INIPTHGSVI…QTKRHEVVHA (143 aa)) are allosteric domain.

Belongs to the CarB family. Composed of two chains; the small (or glutamine) chain promotes the hydrolysis of glutamine to ammonia, which is used by the large (or ammonia) chain to synthesize carbamoyl phosphate. Tetramer of heterodimers (alpha,beta)4. The cofactor is Mg(2+). Mn(2+) serves as cofactor.

The enzyme catalyses hydrogencarbonate + L-glutamine + 2 ATP + H2O = carbamoyl phosphate + L-glutamate + 2 ADP + phosphate + 2 H(+). It catalyses the reaction hydrogencarbonate + NH4(+) + 2 ATP = carbamoyl phosphate + 2 ADP + phosphate + 2 H(+). It participates in amino-acid biosynthesis; L-arginine biosynthesis; carbamoyl phosphate from bicarbonate: step 1/1. It functions in the pathway pyrimidine metabolism; UMP biosynthesis via de novo pathway; (S)-dihydroorotate from bicarbonate: step 1/3. Its function is as follows. Large subunit of the glutamine-dependent carbamoyl phosphate synthetase (CPSase). CPSase catalyzes the formation of carbamoyl phosphate from the ammonia moiety of glutamine, carbonate, and phosphate donated by ATP, constituting the first step of 2 biosynthetic pathways, one leading to arginine and/or urea and the other to pyrimidine nucleotides. The large subunit (synthetase) binds the substrates ammonia (free or transferred from glutamine from the small subunit), hydrogencarbonate and ATP and carries out an ATP-coupled ligase reaction, activating hydrogencarbonate by forming carboxy phosphate which reacts with ammonia to form carbamoyl phosphate. This is Carbamoyl phosphate synthase large chain from Bacillus cereus (strain B4264).